A 225-amino-acid chain; its full sequence is UPF0758 protein Shewmr7_0359 (225 aa).

One can recognise an MPN domain in the interval 102–224; it reads VLTNPDLTRD…IVSFAERGWI (123 aa). Zn(2+) is bound by residues H173, H175, and D186. A JAMM motif motif is present at residues 173–186; it reads HNHPSGIAEPSQAD.

It belongs to the UPF0758 family.

In Shewanella sp. (strain MR-7), this protein is UPF0758 protein Shewmr7_0359.